We begin with the raw amino-acid sequence, 185 residues long: Ribosome-recycling factor (185 aa).

The protein belongs to the RRF family.

It is found in the cytoplasm. Responsible for the release of ribosomes from messenger RNA at the termination of protein biosynthesis. May increase the efficiency of translation by recycling ribosomes from one round of translation to another. The sequence is that of Ribosome-recycling factor from Syntrophobacter fumaroxidans (strain DSM 10017 / MPOB).